The following is a 235-amino-acid chain: Sugar fermentation stimulation protein homolog (235 aa).

This sequence belongs to the SfsA family.

In Pseudomonas aeruginosa (strain ATCC 15692 / DSM 22644 / CIP 104116 / JCM 14847 / LMG 12228 / 1C / PRS 101 / PAO1), this protein is Sugar fermentation stimulation protein homolog.